The primary structure comprises 360 residues: MDAIRAQLDEFLGKDRNLLPKDRIKVENDFNDPDICKFFLCGLCPHELFTNANIRDLGPCSKLHDENCVKQYQNNKDKDKYDYEREWVRVIEGLISDNDKKIKRNKERLLQNPNGDANHHGGPIQQQSISQLDDEEGGLLPDKEQNSKITELDLKIQELLKKAEELGEEGQITEAQALMTEADELKNQKVELEKIEQEKNENKRMSVCEICGALLFVGDKEKRSISHLEGKKHIGFQKIREVMEEYYKSGRRANLGRTDFYNAPPPPRDSYRDDRRSSSSSYHDIDGRRDHRYGGGSRDYGGSDRRGGGNYNNGRGSSRDNYNNINNSRDYRNDHGKDYDRKRERDYYNDDDRRKRDRNY.

The stretch at 143–206 (KEQNSKITEL…QEKNENKRMS (64 aa)) forms a coiled coil. The interval 255 to 360 (LGRTDFYNAP…DDRRKRDRNY (106 aa)) is disordered. The segment covering 269–293 (DSYRDDRRSSSSSYHDIDGRRDHRY) has biased composition (basic and acidic residues). Residues 312–321 (NNGRGSSRDN) show a composition bias toward low complexity. The segment covering 329-360 (RDYRNDHGKDYDRKRERDYYNDDDRRKRDRNY) has biased composition (basic and acidic residues).

Belongs to the Luc7 family.

The protein localises to the nucleus. May play a role in RNA splicing. The polypeptide is Luc7-like protein (crop) (Dictyostelium discoideum (Social amoeba)).